The chain runs to 84 residues: Beta-mammal/insect toxin Ts1 (84 aa).

The first 20 residues, 1–20 (MKGMILFISCLLLIGIVVEC), serve as a signal peptide directing secretion. Residues 21 to 82 (KEGYLMDHEG…VWDRATNKCG (62 aa)) enclose the LCN-type CS-alpha/beta domain. 4 disulfides stabilise this stretch: cysteine 31/cysteine 81, cysteine 35/cysteine 57, cysteine 43/cysteine 62, and cysteine 47/cysteine 64. Cysteine 81 carries the post-translational modification Cysteine amide.

This sequence belongs to the long (4 C-C) scorpion toxin superfamily. Sodium channel inhibitor family. Post-translationally, C-terminal amidation is important for high activity. As to expression, expressed by the venom gland.

The protein localises to the secreted. Voltage-gated sodium channels (Nav) gating-modifier. Acts both as alpha- and beta-toxin, since it affects not only activation but also inactivation of Nav channels. Binds to Nav domain DII and impairs the four Nav channel voltage sensors movements. Depending on Nav channel subtypes tested, can also bind Nav domains DIII (low affinity) and DIV (very low affinity). Acts on almost all the Nav channels tested (mammalian Nav1.2/SCN2A, Nav1.3/SCN3A, Nav1.4/SCN4A, Nav1.5/SCN5A, Nav1.6/SCN8A, Nav1.9/SCN11A, and insect DmNav1). Is highly active against both mammals and insects. Irreversibly modulates DmNav channels. Other Ts1 activities have been studied, such as immunomodulation, antimicrobial activity or exocrine secretion. This toxin exhibits an antifungal activity against filamentous fungi. In vitro, it has an important immunomodulatory effect on macrophages by stimulating the release of pro-inflammatory cytokines. It also shows an activity in exocrine secretion in pancreas, stomach and adrenal gland. This Tityus serrulatus (Brazilian scorpion) protein is Beta-mammal/insect toxin Ts1.